The following is a 78-amino-acid chain: MRSCPKRARGVHWATGAALWCPSRMIFEKISPLQAFVWAVLRLFLKSFRTVFRGAVRAGCGVLACVRAYGFPPYGSKE.

This is an uncharacterized protein from Treponema pallidum (strain Nichols).